Here is a 440-residue protein sequence, read N- to C-terminus: Beta-1,3-galactosyl-O-glycosyl-glycoprotein beta-1,6-N-acetylglucosaminyltransferase 3 (440 aa).

At 1-12 the chain is on the cytoplasmic side; that stretch reads MKMTGWKKKLCR. A helical; Signal-anchor for type II membrane protein membrane pass occupies residues 13–30; it reads GHHLWALGCYSLLAVVAL. At 31 to 440 the chain is on the lumenal side; sequence RLSLRLKCDV…RHKAIYGTEL (410 aa). Intrachain disulfides connect Cys73-Cys230, Cys164-Cys384, Cys185-Cys212, and Cys393-Cys425. Asn108 carries an N-linked (GlcNAc...) asparagine glycan.

The protein belongs to the glycosyltransferase 14 family. In terms of processing, N-glycosylated.

The protein localises to the golgi apparatus membrane. It carries out the reaction a 3-O-[beta-D-galactosyl-(1-&gt;3)-N-acetyl-alpha-D-galactosaminyl]-L-seryl-[protein] + UDP-N-acetyl-alpha-D-glucosamine = 3-O-{beta-D-galactosyl-(1-&gt;3)-[N-acetyl-beta-D-glucosaminyl-(1-&gt;6)]-N-acetyl-alpha-D-galactosaminyl}-L-seryl-[protein] + UDP + H(+). It catalyses the reaction a 3-O-[beta-D-galactosyl-(1-&gt;3)-N-acetyl-alpha-D-galactosaminyl]-L-threonyl-[protein] + UDP-N-acetyl-alpha-D-glucosamine = a 3-O-{beta-D-galactosyl-(1-&gt;3)-[N-acetyl-beta-D-glucosaminyl-(1-&gt;6)]-N-acetyl-alpha-D-galactosaminyl}-L-threonyl-[protein] + UDP + H(+). The catalysed reaction is a beta-D-Gal-(1-&gt;4)-beta-D-GlcNAc-(1-&gt;3)-beta-D-Gal-(1-&gt;4)-beta-D-GlcNAc derivative + UDP-N-acetyl-alpha-D-glucosamine = a beta-D-Gal-(1-&gt;4)-beta-D-GlcNAc-(1-&gt;3)-[beta-D-GlcNAc-(1-&gt;6)]-beta-D-Gal-(1-&gt;4)-N-acetyl-beta-D-glucosaminyl derivative + UDP + H(+). The enzyme catalyses 3-O-[N-acetyl-beta-D-glucosaminyl-(1-&gt;3)-N-acetyl-alpha-D-galactosaminyl]-L-seryl-[protein] + UDP-N-acetyl-alpha-D-glucosamine = 3-O-[N-acetyl-beta-D-glucosaminyl-(1-&gt;3)-[N-acetyl-beta-D-glucosaminyl-(1-&gt;6)]-N-acetyl-alpha-D-galactosaminyl]-L-seryl-[protein] + UDP + H(+). It carries out the reaction a 3-O-[N-acetyl-beta-D-glucosaminyl-(1-&gt;3)-N-acetyl-alpha-D-galactosaminyl]-L-threonyl-[protein] + UDP-N-acetyl-alpha-D-glucosamine = 3-O-[N-acetyl-beta-D-glucosaminyl-(1-&gt;3)-[N-acetyl-beta-D-glucosaminyl-(1-&gt;6)]-N-acetyl-alpha-D-galactosaminyl]-L-threonyl-[protein] + UDP + H(+). It participates in protein modification; protein glycosylation. Functionally, glycosyltransferase that can synthesize all known mucin beta 6 N-acetylglucosaminides. Mediates core 2 and core 4 O-glycan branching, 2 important steps in mucin-type biosynthesis. Also has I-branching enzyme activity by converting linear into branched poly-N-acetyllactosaminoglycans, leading to introduce the blood group I antigen during embryonic development. The polypeptide is Beta-1,3-galactosyl-O-glycosyl-glycoprotein beta-1,6-N-acetylglucosaminyltransferase 3 (GCNT3) (Bos mutus grunniens (Wild yak)).